We begin with the raw amino-acid sequence, 524 residues long: Bifunctional purine biosynthesis protein PurH (524 aa).

Positions methionine 1–valine 144 constitute an MGS-like domain.

It belongs to the PurH family.

It catalyses the reaction (6R)-10-formyltetrahydrofolate + 5-amino-1-(5-phospho-beta-D-ribosyl)imidazole-4-carboxamide = 5-formamido-1-(5-phospho-D-ribosyl)imidazole-4-carboxamide + (6S)-5,6,7,8-tetrahydrofolate. It carries out the reaction IMP + H2O = 5-formamido-1-(5-phospho-D-ribosyl)imidazole-4-carboxamide. It participates in purine metabolism; IMP biosynthesis via de novo pathway; 5-formamido-1-(5-phospho-D-ribosyl)imidazole-4-carboxamide from 5-amino-1-(5-phospho-D-ribosyl)imidazole-4-carboxamide (10-formyl THF route): step 1/1. Its pathway is purine metabolism; IMP biosynthesis via de novo pathway; IMP from 5-formamido-1-(5-phospho-D-ribosyl)imidazole-4-carboxamide: step 1/1. The sequence is that of Bifunctional purine biosynthesis protein PurH from Anaeromyxobacter dehalogenans (strain 2CP-1 / ATCC BAA-258).